The chain runs to 708 residues: Protein MICRORCHIDIA 5 (708 aa).

A compositionally biased stretch (polar residues) spans 1-11; it reads MAESGSTNPKS. The segment at 1–47 is disordered; it reads MAESGSTNPKSPSVVPDSTLGGLKRDLRNYHDGDDSNNLSIKKSKTT. Residues 23-34 are compositionally biased toward basic and acidic residues; the sequence is LKRDLRNYHDGD. Residues 590 to 665 are a coiled coil; the sequence is SVNLEAELQK…LENRQEGVST (76 aa). A Nuclear localization signal motif is present at residues 672–679; that stretch reads ARRDVTED.

Belongs to the MORC ATPase protein family. As to quaternary structure, homodimer and heterodimer. Component of an RNA-directed DNA methylation (RdDM) complex. Mg(2+) is required as a cofactor. Requires Mn(2+) as cofactor.

It is found in the nucleus. Functionally, exhibits ATPase activity. Binds DNA/RNA in a non-specific manner and exhibits endonuclease activity. Probably involved in DNA repair. Involved in RNA-directed DNA methylation (RdDM) as a component of the RdDM machinery and required for gene silencing. May also be involved in the regulation of chromatin architecture to maintain gene silencing. This chain is Protein MICRORCHIDIA 5, found in Arabidopsis thaliana (Mouse-ear cress).